The following is a 686-amino-acid chain: DNA ligase (686 aa).

NAD(+) contacts are provided by residues 31-35 (DSEYD), 80-81 (SL), and glutamate 109. Lysine 111 acts as the N6-AMP-lysine intermediate in catalysis. NAD(+) is bound by residues arginine 132, glutamate 166, lysine 280, and lysine 304. Zn(2+) is bound by residues cysteine 430, cysteine 433, cysteine 448, and cysteine 453. One can recognise a BRCT domain in the interval 611–686 (NVEGILSGKT…IWSEQDLLDL (76 aa)).

This sequence belongs to the NAD-dependent DNA ligase family. LigA subfamily. The cofactor is Mg(2+). Mn(2+) is required as a cofactor.

The catalysed reaction is NAD(+) + (deoxyribonucleotide)n-3'-hydroxyl + 5'-phospho-(deoxyribonucleotide)m = (deoxyribonucleotide)n+m + AMP + beta-nicotinamide D-nucleotide.. Functionally, DNA ligase that catalyzes the formation of phosphodiester linkages between 5'-phosphoryl and 3'-hydroxyl groups in double-stranded DNA using NAD as a coenzyme and as the energy source for the reaction. It is essential for DNA replication and repair of damaged DNA. In Lactococcus lactis subsp. cremoris (strain SK11), this protein is DNA ligase.